The following is a 190-amino-acid chain: Protein GrpE (190 aa).

Positions 1 to 31 are enriched in polar residues; the sequence is MTETPNTSSEEIQTSEPSSDNELQTLQQENA. The segment at 1–34 is disordered; the sequence is MTETPNTSSEEIQTSEPSSDNELQTLQQENANLK.

The protein belongs to the GrpE family. As to quaternary structure, homodimer.

It localises to the cytoplasm. Its function is as follows. Participates actively in the response to hyperosmotic and heat shock by preventing the aggregation of stress-denatured proteins, in association with DnaK and GrpE. It is the nucleotide exchange factor for DnaK and may function as a thermosensor. Unfolded proteins bind initially to DnaJ; upon interaction with the DnaJ-bound protein, DnaK hydrolyzes its bound ATP, resulting in the formation of a stable complex. GrpE releases ADP from DnaK; ATP binding to DnaK triggers the release of the substrate protein, thus completing the reaction cycle. Several rounds of ATP-dependent interactions between DnaJ, DnaK and GrpE are required for fully efficient folding. This is Protein GrpE from Chlamydia muridarum (strain MoPn / Nigg).